Reading from the N-terminus, the 118-residue chain is NADH-quinone oxidoreductase subunit A 2 (118 aa).

Transmembrane regions (helical) follow at residues 5–25 (YLPI…SLIF), 62–82 (IIAM…PWAV), and 87–107 (LGMF…VGYI).

It belongs to the complex I subunit 3 family. In terms of assembly, NDH-1 is composed of 14 different subunits. Subunits NuoA, H, J, K, L, M, N constitute the membrane sector of the complex.

The protein resides in the cell inner membrane. It carries out the reaction a quinone + NADH + 5 H(+)(in) = a quinol + NAD(+) + 4 H(+)(out). Functionally, NDH-1 shuttles electrons from NADH, via FMN and iron-sulfur (Fe-S) centers, to quinones in the respiratory chain. The immediate electron acceptor for the enzyme in this species is believed to be ubiquinone. Couples the redox reaction to proton translocation (for every two electrons transferred, four hydrogen ions are translocated across the cytoplasmic membrane), and thus conserves the redox energy in a proton gradient. The polypeptide is NADH-quinone oxidoreductase subunit A 2 (Geotalea uraniireducens (strain Rf4) (Geobacter uraniireducens)).